A 308-amino-acid chain; its full sequence is Methionyl-tRNA formyltransferase (308 aa).

109–112 (SLLP) contributes to the (6S)-5,6,7,8-tetrahydrofolate binding site.

This sequence belongs to the Fmt family.

It carries out the reaction L-methionyl-tRNA(fMet) + (6R)-10-formyltetrahydrofolate = N-formyl-L-methionyl-tRNA(fMet) + (6S)-5,6,7,8-tetrahydrofolate + H(+). Its function is as follows. Attaches a formyl group to the free amino group of methionyl-tRNA(fMet). The formyl group appears to play a dual role in the initiator identity of N-formylmethionyl-tRNA by promoting its recognition by IF2 and preventing the misappropriation of this tRNA by the elongation apparatus. The sequence is that of Methionyl-tRNA formyltransferase from Salinispora tropica (strain ATCC BAA-916 / DSM 44818 / JCM 13857 / NBRC 105044 / CNB-440).